A 263-amino-acid chain; its full sequence is Putative hydro-lyase Psyc_1103 (263 aa).

The protein belongs to the D-glutamate cyclase family.

The protein is Putative hydro-lyase Psyc_1103 of Psychrobacter arcticus (strain DSM 17307 / VKM B-2377 / 273-4).